A 430-amino-acid chain; its full sequence is MGKNVVVLGTQWGDEGKGKIVDLLTEHATAVVRYQGGHNAGHTLVIDGEKTVLHLIPSGVLREGVQCLIGNGVVVAPDALLREIIKLEEKGIPVRERLRISPSCPLILSYHVALDQAREKARGEFKIGTTGRGIGPAYEDKVARRGLRIGDLFHRERFAAKLGELLDYHNFVLVNYYKEPAIDFQKTLDECMEYADMLKPLMLDVTAALHEMRRDGKDIMFEGAQGSLLDIDHGTYPYVTSSNTTAGGIATGSGFGPMYLDYILGITKAYTTRVGSGPFPTELFDDVGAFLAKRGHEFGATTGRARRCGWFDAVILRRAIEINSISGLCLTKLDVLDGLETINICIGYENEEGAVIDAPTDADSYLGLRPVYEEMPGWSESTLGAKTLEELPAAARAYIKRVEELVGAPIDIISTGPDRNETIVLRHPFG.

GTP-binding positions include 13–19 (GDEGKGK) and 41–43 (GHT). Asp-14 serves as the catalytic Proton acceptor. Asp-14 and Gly-41 together coordinate Mg(2+). IMP is bound by residues 14–17 (DEGK), 39–42 (NAGH), Thr-130, Arg-144, Gln-225, Thr-240, and Arg-304. The active-site Proton donor is His-42. Position 300-306 (300-306 (ATTGRAR)) interacts with substrate. GTP is bound by residues Arg-306, 332 to 334 (KLD), and 414 to 416 (STG).

Belongs to the adenylosuccinate synthetase family. As to quaternary structure, homodimer. The cofactor is Mg(2+).

The protein resides in the cytoplasm. The enzyme catalyses IMP + L-aspartate + GTP = N(6)-(1,2-dicarboxyethyl)-AMP + GDP + phosphate + 2 H(+). Its pathway is purine metabolism; AMP biosynthesis via de novo pathway; AMP from IMP: step 1/2. Its function is as follows. Plays an important role in the de novo pathway of purine nucleotide biosynthesis. Catalyzes the first committed step in the biosynthesis of AMP from IMP. This chain is Adenylosuccinate synthetase, found in Pseudomonas syringae pv. tomato (strain ATCC BAA-871 / DC3000).